Here is a 128-residue protein sequence, read N- to C-terminus: Light-regulated protein, chloroplastic (128 aa).

A run of 2 repeats spans residues 58–72 and 111–125. A 2 X 15 AA approximate repeats region spans residues 58-125; the sequence is VFPMEACDLI…ACDDLGGEFC (68 aa).

As to quaternary structure, component of high molecular weight thylakoid LFNRs-containing protein complexes containing LIR1, LFNR1, LFNR2, TIC62 and TROL proteins. Interacts directly with LFNR1 and LFNR2; LIR1 increases the affinity of LFNR1 and LFNR2 for TIC62 and subsequent thylakoid relocalization. Post-translationally, may form interchain disulfide bonds with LFNR1 and LFNR2.

The protein localises to the plastid. It is found in the chloroplast thylakoid membrane. Its subcellular location is the chloroplast envelope. It localises to the chloroplast stroma. In terms of biological role, thylakoid-determinant subunit of high molecular weight LFNRs-containing protein complexes. This is Light-regulated protein, chloroplastic (LIR1) from Oryza sativa subsp. japonica (Rice).